A 209-amino-acid chain; its full sequence is MDLARQIAMELLDIQAVYLRPKQPFTWASGVKSPIYTDNRVTLSYPETRTLIENGFVKQIQEHFPNVDIIAGTATAGIPHGAIIADKMNLPFAYIRSKAKDHGVGNQIEGRVYSGQKMVIIEDLISTGGSVLEAVTAAQSQGIEVLGVVAIFTYQLAKAEQAFREANIPLVTLTDYNQLIKVAKVNGYITADQLVLLKKFKEDQMNWQS.

Residues Arg96, Lys100, His102, and 122 to 130 (EDLISTGGS) contribute to the 5-phospho-alpha-D-ribose 1-diphosphate site. Residue Ser126 coordinates orotate.

The protein belongs to the purine/pyrimidine phosphoribosyltransferase family. PyrE subfamily. Homodimer. Requires Mg(2+) as cofactor.

The catalysed reaction is orotidine 5'-phosphate + diphosphate = orotate + 5-phospho-alpha-D-ribose 1-diphosphate. It functions in the pathway pyrimidine metabolism; UMP biosynthesis via de novo pathway; UMP from orotate: step 1/2. Its function is as follows. Catalyzes the transfer of a ribosyl phosphate group from 5-phosphoribose 1-diphosphate to orotate, leading to the formation of orotidine monophosphate (OMP). The polypeptide is Orotate phosphoribosyltransferase (Streptococcus agalactiae serotype Ia (strain ATCC 27591 / A909 / CDC SS700)).